The primary structure comprises 112 residues: 2Fe-2S ferredoxin (112 aa).

Residues 1–104 enclose the 2Fe-2S ferredoxin-type domain; the sequence is MPQIVILPHA…DLVVEIPKYT (104 aa). [2Fe-2S] cluster is bound by residues cysteine 42, cysteine 48, cysteine 51, and cysteine 87.

Belongs to the adrenodoxin/putidaredoxin family. The cofactor is [2Fe-2S] cluster.

Ferredoxin are iron-sulfur proteins that transfer electrons in a wide variety of metabolic reactions. This is 2Fe-2S ferredoxin (fdx) from Pseudomonas aeruginosa (strain ATCC 15692 / DSM 22644 / CIP 104116 / JCM 14847 / LMG 12228 / 1C / PRS 101 / PAO1).